Reading from the N-terminus, the 185-residue chain is Elongation factor P (185 aa).

It belongs to the elongation factor P family.

Its subcellular location is the cytoplasm. It functions in the pathway protein biosynthesis; polypeptide chain elongation. Involved in peptide bond synthesis. Stimulates efficient translation and peptide-bond synthesis on native or reconstituted 70S ribosomes in vitro. Probably functions indirectly by altering the affinity of the ribosome for aminoacyl-tRNA, thus increasing their reactivity as acceptors for peptidyl transferase. This chain is Elongation factor P, found in Limosilactobacillus fermentum (strain NBRC 3956 / LMG 18251) (Lactobacillus fermentum).